We begin with the raw amino-acid sequence, 26 residues long: Coenzyme PQQ synthesis protein A (26 aa).

Positions 16 to 20 (EINMY) form a cross-link, pyrroloquinoline quinone (Glu-Tyr).

The protein belongs to the PqqA family.

Its pathway is cofactor biosynthesis; pyrroloquinoline quinone biosynthesis. Its function is as follows. Required for coenzyme pyrroloquinoline quinone (PQQ) biosynthesis. PQQ is probably formed by cross-linking a specific glutamate to a specific tyrosine residue and excising these residues from the peptide. The protein is Coenzyme PQQ synthesis protein A of Cereibacter sphaeroides (strain ATCC 17029 / ATH 2.4.9) (Rhodobacter sphaeroides).